The sequence spans 162 residues: MEKVFEKLMYASRWIMAPIYLGLSLILFALGIKFFQEIFHLIPNIFEIAEVDLVLITLSLIDITLVGGLLIMVMFSGYENFVSQLDVGESSEKLNWLGKMDAGSLKNKVAASIVAISSIHLLKVFMNAENIANDKIMWYLLIHITFVLSAFAMGYLDKITRK.

A run of 3 helical transmembrane segments spans residues 15 to 35 (IMAP…IKFF), 53 to 73 (LVLI…LIMV), and 136 to 156 (IMWY…MGYL).

The protein belongs to the UPF0114 family.

It is found in the cell membrane. This Shewanella denitrificans (strain OS217 / ATCC BAA-1090 / DSM 15013) protein is UPF0114 protein Sden_0436.